The sequence spans 824 residues: Dapper 1 (824 aa).

Disordered regions lie at residues M1–R34, A61–P80, E131–G150, T454–Q487, and A516–Q536. Residues K2–S343 form an interaction with tcf7l1 region. The span at L11–R34 shows a compositional bias: basic and acidic residues. Residues R19–L47 are a coiled coil. Basic and acidic residues predominate over residues F520–S530. The PDZ-binding signature appears at M821–V824.

This sequence belongs to the dapper family. In terms of assembly, interacts with dbf4, dvl2 and tcf7l1.

It is found in the cytoplasm. It localises to the nucleus. Functionally, involved in regulation of intracellular signaling pathways during development. Specifically thought to play a role in canonical and/or non-canonical Wnt signaling pathways through interaction with DSH (Dishevelled) family proteins. Binds to dvl2 and regulates the degradation of ctnnb1/beta-catenin, thereby modulating the transcriptional activation of target genes of the Wnt signaling pathway. May also bind to and directly stimulate the activity of tcf7l1. This is Dapper 1 (dact1) from Xenopus tropicalis (Western clawed frog).